We begin with the raw amino-acid sequence, 440 residues long: Xaa-Pro dipeptidase (440 aa).

Asp244, Asp255, His335, Glu380, and Glu419 together coordinate Mn(2+).

This sequence belongs to the peptidase M24B family. Bacterial-type prolidase subfamily. Mn(2+) is required as a cofactor.

The catalysed reaction is Xaa-L-Pro dipeptide + H2O = an L-alpha-amino acid + L-proline. Functionally, splits dipeptides with a prolyl residue in the C-terminal position. The sequence is that of Xaa-Pro dipeptidase from Shewanella baltica (strain OS223).